A 228-amino-acid chain; its full sequence is Transcription termination/antitermination protein NusG (228 aa).

It belongs to the NusG family.

Functionally, participates in transcription elongation, termination and antitermination. The chain is Transcription termination/antitermination protein NusG from Mycobacterium leprae (strain TN).